Reading from the N-terminus, the 155-residue chain is Large ribosomal subunit protein uL22 (155 aa).

This sequence belongs to the universal ribosomal protein uL22 family. In terms of assembly, part of the 50S ribosomal subunit.

Functionally, this protein binds specifically to 23S rRNA. It makes multiple contacts with different domains of the 23S rRNA in the assembled 50S subunit and ribosome. The globular domain of the protein is located near the polypeptide exit tunnel on the outside of the subunit, while an extended beta-hairpin is found that lines the wall of the exit tunnel in the center of the 70S ribosome. The chain is Large ribosomal subunit protein uL22 from Pyrococcus abyssi (strain GE5 / Orsay).